The following is a 1129-amino-acid chain: Nuclear pore complex protein 15 (1129 aa).

The protein belongs to the nucleoporin Nup133 family.

The protein resides in the nucleus envelope. Its subcellular location is the nucleus. It is found in the nuclear pore complex. In terms of biological role, important for early nematode development. In Caenorhabditis elegans, this protein is Nuclear pore complex protein 15.